The sequence spans 426 residues: Serine/threonine-protein kinase SRPK (426 aa).

Residues Met-1 to Asp-23 show a composition bias toward basic and acidic residues. Residues Met-1 to Lys-40 are disordered. Residues Ser-24–Thr-35 are compositionally biased toward acidic residues. A Protein kinase domain is found at Tyr-56–Met-419. ATP-binding positions include Leu-62–Val-70 and Lys-86. Residue Asp-188 is the Proton acceptor of the active site. Positions Pro-318–Asp-328 match the Nuclear localization signal motif.

It belongs to the protein kinase superfamily. CMGC Ser/Thr protein kinase family.

The protein localises to the nucleus. It catalyses the reaction L-seryl-[protein] + ATP = O-phospho-L-seryl-[protein] + ADP + H(+). It carries out the reaction L-threonyl-[protein] + ATP = O-phospho-L-threonyl-[protein] + ADP + H(+). Phosphorylates serine/arginine-rich protein PSR. The protein is Serine/threonine-protein kinase SRPK of Physarum polycephalum (Slime mold).